A 239-amino-acid polypeptide reads, in one-letter code: uncharacterized protein (239 aa).

8 helical membrane passes run 4 to 24, 29 to 49, 61 to 81, 84 to 104, 116 to 136, 139 to 159, 180 to 200, and 218 to 238; these read LIPK…LGMV, VIWH…VYPV, YQKW…ISVF, PPLI…MYFA, VAGV…GMGT, GWAW…SFYV, LLLP…AFIP, and IGIL…LFIT.

To H.influenzae HI_1626.

Its subcellular location is the cell membrane. This is an uncharacterized protein from Bacillus subtilis (strain 168).